Consider the following 564-residue polypeptide: Beta-N-acetylglucosaminidase/beta-glucosidase (564 aa).

Aspartate 283 serves as the catalytic Nucleophile.

It belongs to the glycosyl hydrolase 3 family.

It catalyses the reaction Hydrolysis of terminal non-reducing N-acetyl-D-hexosamine residues in N-acetyl-beta-D-hexosaminides.. The catalysed reaction is Hydrolysis of terminal, non-reducing beta-D-glucosyl residues with release of beta-D-glucose.. In terms of biological role, catalyzes the cleavage of beta-N-acetyl-D-glucosaminides and beta-D-glucosides. Might be involved in the degradation of glucuronic acid-containing glycosaminoglycans such as hyaluronic acid. The polypeptide is Beta-N-acetylglucosaminidase/beta-glucosidase (nag3) (Cellulomonas fimi).